Reading from the N-terminus, the 420-residue chain is MAGGYIARVNMKGHYLSWSSDNTYPWQNIQPTQNTKLLGLQDIGFTTDPVRRLRQHNSEIGGGAVRTTRAKGSWDMAAIVYGFPNKVAALRFEWAWQHPLKSRRLRDAVRSDLPASRAAQMQLTAKLHTLAAMLYTVPWSDQPLTLCWLQPDIADKWSNIWQRHCQCQSALPPFLTTRSGNLQDPLFQLNNAAAAASTIQRAALAADHHAWRLAAAAQAQAPDFFTGLGRLDLAAPSVEESGAGPHPSSCSVPPSTGSSAAPTPGALAPQPTKQNKFGVDPRLDSDDRDDNHQFESPDNHEAAAVNVDVVDDSADDGTTDGNEDGPDDVAPHQEVTARHVHGAIGETCGHCHQSVYQELCIVCLNATCTYRAHLLCAAQAAVHPLGQSSPSETRLVPLRHSCPRCAHQAHWASWIAEVTL.

Residues 19–106 (SSDNTYPWQN…QHPLKSRRLR (88 aa)) form the GIY-YIG domain. 2 disordered regions span residues 237 to 306 (SVEE…AAVN) and 311 to 330 (DDSADDGTTDGNEDGPDDVA). The segment covering 247–266 (PSSCSVPPSTGSSAAPTPGA) has biased composition (low complexity). Positions 279-301 (VDPRLDSDDRDDNHQFESPDNHE) are enriched in basic and acidic residues. Positions 311–327 (DDSADDGTTDGNEDGPD) are enriched in acidic residues. The SLX1-type zinc-finger motif lies at 348 to 405 (CGHCHQSVYQELCIVCLNATCTYRAHLLCAAQAAVHPLGQSSPSETRLVPLRHSCPRC).

The protein belongs to the SLX1 family. In terms of assembly, forms a heterodimer with a member of the SLX4 family. It depends on a divalent metal cation as a cofactor.

It localises to the nucleus. Its function is as follows. Catalytic subunit of a heterodimeric structure-specific endonuclease that resolves DNA secondary structures generated during DNA repair and recombination. Has endonuclease activity towards branched DNA substrates, introducing single-strand cuts in duplex DNA close to junctions with ss-DNA. This chain is Structure-specific endonuclease subunit SLX1 homolog, found in Monosiga brevicollis (Choanoflagellate).